A 59-amino-acid polypeptide reads, in one-letter code: Protein translocase subunit SecE (59 aa).

A helical membrane pass occupies residues 35–55 (IVAIGIAIIGVVGFIIVLIGE).

This sequence belongs to the SecE/SEC61-gamma family. Component of the Sec protein translocase complex. Heterotrimer consisting of SecY (alpha), SecG (beta) and SecE (gamma) subunits. The heterotrimers can form oligomers, although 1 heterotrimer is thought to be able to translocate proteins. Interacts with the ribosome. May interact with SecDF, and other proteins may be involved.

The protein resides in the cell membrane. Functionally, essential subunit of the Sec protein translocation channel SecYEG. Clamps together the 2 halves of SecY. May contact the channel plug during translocation. In Methanobrevibacter smithii (strain ATCC 35061 / DSM 861 / OCM 144 / PS), this protein is Protein translocase subunit SecE.